The primary structure comprises 392 residues: Tryptophan synthase beta chain 1 (392 aa).

At Lys-85 the chain carries N6-(pyridoxal phosphate)lysine.

This sequence belongs to the TrpB family. Tetramer of two alpha and two beta chains. Pyridoxal 5'-phosphate is required as a cofactor.

The enzyme catalyses (1S,2R)-1-C-(indol-3-yl)glycerol 3-phosphate + L-serine = D-glyceraldehyde 3-phosphate + L-tryptophan + H2O. It functions in the pathway amino-acid biosynthesis; L-tryptophan biosynthesis; L-tryptophan from chorismate: step 5/5. In terms of biological role, the beta subunit is responsible for the synthesis of L-tryptophan from indole and L-serine. In Methanothermobacter thermautotrophicus (strain ATCC 29096 / DSM 1053 / JCM 10044 / NBRC 100330 / Delta H) (Methanobacterium thermoautotrophicum), this protein is Tryptophan synthase beta chain 1 (trpB1).